Consider the following 804-residue polypeptide: Probable protein phosphatase 2C 18 (804 aa).

A helical membrane pass occupies residues 19 to 39; it reads DASGPVLFWCVLIIFAVPDAI. Positions 129-434 constitute a PPM-type phosphatase domain; it reads KYIVSSMQGL…ENTTVILVQF (306 aa). 4 residues coordinate Mn(2+): Asp-165, Gly-166, Gln-384, and Glu-425. 4 disordered regions span residues 460-509, 564-599, 623-653, and 675-804; these read STSA…GGSA, DEVE…LNAS, PLQG…DDDV, and VDST…EGSP. Residues 468-499 show a composition bias toward low complexity; that stretch reads GSDSDTSATSDEGVDDTATAGTTTTGYEAGSS. A compositionally biased stretch (polar residues) spans 628–637; that stretch reads DVSSTSTNPN. The span at 638–647 shows a compositional bias: low complexity; sequence TATDTGSGSR. Positions 713–734 are enriched in polar residues; that stretch reads LVNNDTTVADNNASGVADSTTV. Over residues 776 to 789 the composition is skewed to low complexity; sequence DATATATASASAAV. Over residues 790–804 the composition is skewed to acidic residues; the sequence is ADDEGTAPDDSEGSP.

The protein belongs to the PP2C family. The cofactor is Mg(2+). Mn(2+) serves as cofactor.

The protein localises to the membrane. It carries out the reaction O-phospho-L-seryl-[protein] + H2O = L-seryl-[protein] + phosphate. The enzyme catalyses O-phospho-L-threonyl-[protein] + H2O = L-threonyl-[protein] + phosphate. This chain is Probable protein phosphatase 2C 18, found in Oryza sativa subsp. japonica (Rice).